Consider the following 166-residue polypeptide: Nucleotide-binding protein SUN_0226 (166 aa).

The protein belongs to the YajQ family.

Its function is as follows. Nucleotide-binding protein. The polypeptide is Nucleotide-binding protein SUN_0226 (Sulfurovum sp. (strain NBC37-1)).